A 684-amino-acid chain; its full sequence is Sorbicillinoid biosynthetic cluster transcription factor 2 (684 aa).

Positions 114–151 are disordered; it reads ISSAPSLETPPESVAASPPTVDSIPVSHHVNEDPEAEP.

The protein localises to the nucleus. Its function is as follows. Transcription factor that acts in concert with sorR1 which is a transcriptional activator of the gene cluster that mediates the biosynthesis of sorbicillinoids, a diverse group of yellow secondary metabolites that restrict growth of competing pathogenic fungi but not of bacteria. The sequence is that of Sorbicillinoid biosynthetic cluster transcription factor 2 from Penicillium rubens (strain ATCC 28089 / DSM 1075 / NRRL 1951 / Wisconsin 54-1255) (Penicillium chrysogenum).